The sequence spans 2410 residues: Genome polyprotein 1 (2410 aa).

Residues 1 to 22 (MEQTLAQAVSRKSKTDTPMAEE) form a disordered region. The 159-residue stretch at 474–632 (KMADANNCWS…AARKYPLHVE (159 aa)) folds into the Helicase ATP-binding domain. Position 487-494 (487-494 (GHTGSGKS)) interacts with ATP. One can recognise a Helicase C-terminal domain in the interval 647–813 (GGGDLLDISK…NVPFYMNETF (167 aa)). Position 1234 is an O-(5'-phospho-RNA)-tyrosine (Tyr1234). The region spanning 1359 to 1573 (ITLEASTGIL…CGYASHTALF (215 aa)) is the Peptidase C4 domain. Residues His1404, Asp1440, and Cys1507 each act as for nuclear inclusion protein A activity in the active site. One can recognise a RdRp catalytic domain in the interval 1857 to 1980 (WLHGSGDGSR…AISPQFDEEF (124 aa)). A disordered region spans residues 2173 to 2200 (TRTPTEDDGKLKTPSGARIPSSAADGNW).

Belongs to the bymoviruses polyprotein 1 family. Post-translationally, VPg is uridylylated by the polymerase and is covalently attached to the 5'-end of the genomic RNA. This uridylylated form acts as a nucleotide-peptide primer for the polymerase. In terms of processing, the viral RNA1 of bymoviruses is expressed as a single polyprotein which undergoes post-translational proteolytic processing by the main proteinase NIa-pro resulting in the production of at least eight individual proteins.

The protein resides in the host cytoplasmic vesicle. It is found in the virion. It carries out the reaction RNA(n) + a ribonucleoside 5'-triphosphate = RNA(n+1) + diphosphate. The catalysed reaction is Hydrolyzes glutaminyl bonds, and activity is further restricted by preferences for the amino acids in P6 - P1' that vary with the species of potyvirus, e.g. Glu-Xaa-Xaa-Tyr-Xaa-Gln-|-(Ser or Gly) for the enzyme from tobacco etch virus. The natural substrate is the viral polyprotein, but other proteins and oligopeptides containing the appropriate consensus sequence are also cleaved.. Its function is as follows. Indispensable for virus replication. Functionally, mediates the cap-independent, EIF4E-dependent translation of viral genomic RNAs. Binds to the cap-binding site of host EIF4E and thus interferes with the host EIF4E-dependent mRNA export and translation. VPg-RNA directly binds EIF4E and is a template for transcription. Also forms trimeric complexes with EIF4E-EIF4G, which are templates for translation. In terms of biological role, has RNA-binding and proteolytic activities. An RNA-dependent RNA polymerase that plays an essential role in the virus replication. This Hordeum vulgare (Barley) protein is Genome polyprotein 1.